We begin with the raw amino-acid sequence, 347 residues long: Melanoma-associated antigen B1 (347 aa).

Basic residues predominate over residues 1–17 (MPRGQKSKLRAREKRRK). Residues 1–104 (MPRGQKSKLR…QATTSTESSV (104 aa)) form a disordered region. Composition is skewed to polar residues over residues 39–53 (PSSS…TSSP) and 89–102 (ENAS…STES). The 200-residue stretch at 108–307 (VAWEAGMLMH…RDFPSHYEEA (200 aa)) folds into the MAGE domain. The tract at residues 315–347 (AQVRSSVRARRRTTATTFRARSRAPFSRSSHPM) is disordered. Residues 328–347 (TATTFRARSRAPFSRSSHPM) are compositionally biased toward low complexity.

Expressed only in testis.

The polypeptide is Melanoma-associated antigen B1 (MAGEB1) (Homo sapiens (Human)).